The following is a 156-amino-acid chain: 6,7-dimethyl-8-ribityllumazine synthase (156 aa).

5-amino-6-(D-ribitylamino)uracil contacts are provided by residues phenylalanine 23, 57-59, and 81-83; these read AYE and AII. 86 to 87 contacts (2S)-2-hydroxy-3-oxobutyl phosphate; the sequence is GT. Histidine 89 functions as the Proton donor in the catalytic mechanism. Position 114 (phenylalanine 114) interacts with 5-amino-6-(D-ribitylamino)uracil. Residue arginine 128 coordinates (2S)-2-hydroxy-3-oxobutyl phosphate.

The protein belongs to the DMRL synthase family.

The enzyme catalyses (2S)-2-hydroxy-3-oxobutyl phosphate + 5-amino-6-(D-ribitylamino)uracil = 6,7-dimethyl-8-(1-D-ribityl)lumazine + phosphate + 2 H2O + H(+). Its pathway is cofactor biosynthesis; riboflavin biosynthesis; riboflavin from 2-hydroxy-3-oxobutyl phosphate and 5-amino-6-(D-ribitylamino)uracil: step 1/2. Functionally, catalyzes the formation of 6,7-dimethyl-8-ribityllumazine by condensation of 5-amino-6-(D-ribitylamino)uracil with 3,4-dihydroxy-2-butanone 4-phosphate. This is the penultimate step in the biosynthesis of riboflavin. This Helicobacter pylori (strain ATCC 700392 / 26695) (Campylobacter pylori) protein is 6,7-dimethyl-8-ribityllumazine synthase.